A 265-amino-acid chain; its full sequence is Adenosylcobinamide-GDP ribazoletransferase (265 aa).

7 consecutive transmembrane segments (helical) span residues 40-60, 67-87, 121-141, 150-170, 191-211, 213-233, and 243-263; these read IAYAIPLAGAVIGLIGAVVLV, LPAFLASVLAVTALVLTTGAF, GGCALILALLLRVAALEALVA, LALVVAEAASRAAGVLLLLAL, LACALVAALLVVVILVPGFGI, TAFAGLIAPLVALFAMMRLSG, and VAGATQQVAVIVFLLGVLIFP.

It belongs to the CobS family. Mg(2+) serves as cofactor.

It is found in the cell inner membrane. It carries out the reaction alpha-ribazole + adenosylcob(III)inamide-GDP = adenosylcob(III)alamin + GMP + H(+). The catalysed reaction is alpha-ribazole 5'-phosphate + adenosylcob(III)inamide-GDP = adenosylcob(III)alamin 5'-phosphate + GMP + H(+). It participates in cofactor biosynthesis; adenosylcobalamin biosynthesis; adenosylcobalamin from cob(II)yrinate a,c-diamide: step 7/7. Joins adenosylcobinamide-GDP and alpha-ribazole to generate adenosylcobalamin (Ado-cobalamin). Also synthesizes adenosylcobalamin 5'-phosphate from adenosylcobinamide-GDP and alpha-ribazole 5'-phosphate. This is Adenosylcobinamide-GDP ribazoletransferase from Xanthobacter autotrophicus (strain ATCC BAA-1158 / Py2).